Here is a 217-residue protein sequence, read N- to C-terminus: Superoxide dismutase [Mn], mitochondrial (217 aa).

The N-terminal 17 residues, 1–17 (MFVARKISPNCKPGVRG), are a transit peptide targeting the mitochondrion. H43, H91, D175, and H179 together coordinate Mn(2+).

It belongs to the iron/manganese superoxide dismutase family. As to quaternary structure, homotetramer. The cofactor is Mn(2+).

The protein localises to the mitochondrion matrix. It carries out the reaction 2 superoxide + 2 H(+) = H2O2 + O2. In terms of biological role, destroys superoxide anion radicals which are normally produced within the cells and which are toxic to biological systems. This chain is Superoxide dismutase [Mn], mitochondrial (Sod2), found in Drosophila melanogaster (Fruit fly).